A 206-amino-acid polypeptide reads, in one-letter code: Somatotropin (206 aa).

The N-terminal stretch at 1–22 (MAGLHFFPALLALLMASLQTHQ) is a signal peptide. 2 disulfides stabilise this stretch: Cys-75-Cys-179 and Cys-196-Cys-204.

Belongs to the somatotropin/prolactin family.

The protein resides in the secreted. In terms of biological role, growth hormone plays an important role in growth control and is involved in the regulation of several anabolic processes. Implicated as an osmoregulatory substance important for seawater adaptation. The polypeptide is Somatotropin (gh) (Protopterus annectens (African lungfish)).